Consider the following 1180-residue polypeptide: MSTKDAHDPFATPLETITHDPLAETAGLKADYDKRAYGEANPALMGTLEKDDMANRPIDAVEEVPTTSIRKWWVRLTWFTTWWIPSFVLSKCGGMKRPDVQMAWREKFTICAIIFWLCAIILFYIIAFGRLLCPDYDKAWNLSQLSQHAGENDYYAAVRGTVYDFSKFYKGDHSDITNLQTSSDLMLQLAGQDLTGYFPVPLSVGCQSLVSDTSLALMPTANNTPLISQAIHTSGPLQGDTSSKLHDINWYPDRFLPFVKKLRKGYYVYSKKDLANQGQWRNWAVIHGKVYDLSNYLNTVSTYQTNPAYSFLDSSIVSLFKSQAGSDITADFEDAMSTFNQTYRGATQACLDNVFYVGRTDFRDTARCEVQNYLLLAFSVLLVTTVLAKFIAALQLGTKRSPEQQDKFVICQVPCYTEGEEELRKTIDSLAGLEYDDKRKLLFLICDGMIVGSGNDRSTPRIVLDILGVDPKIDPEPLMFKSVAEGSKQLNYAKVYSGLYEFEGHVVPYIVVVKVGRPSERSRPGNRGKRDSQILLMRYLNRVHFDAPMFPLELEIYHQMKNVIGIDPAFYEYILMVDADTRVEADGLNRLVANCADDSSIIAICGETTLDNAEGSWWTMIQVYEYYISHHLSKAFESLFGSVTCLPGCFSLYRIRSSDKGRPLFISNRIIDDYSENRVDTLHKKNLLHLGEDRYLTTLVLKNFPSFRTKFVPDAKALTSAPDRFGVLLSQRRRWINSTVHNLAELVLMPELCGFCLFSMRFIVFIDLLGTVILPATAVYLVYLIVTVATKSAPIPYISIAMIAAVYGLQAILFLLKRQWQYIGWLVIYILAYPVFSFFLPIYSFWHMDDFSWGNTRIVVGEKGNKKIVAGTDDEPYDDTMIPLKRFSEYQREVWEEEAAAPSMRSGMTGASGPFGNSQAILHSGPPSVYRAGGSAYAGSVAGSDYGAGLGDYYQNTNVLQKPAHSRQTSAAALSQMGGSQAASMMFGTGTPSVYGMAGMGSMYGMPGSSASMYGLPNPMMNTTASMYGLPPMLANPLGANHSPAHSDIGVSMPVSQQNTGGSHIWAQPPEAATVAANSGRGSGMQARPVSTLSALNATNPFGVTAVARALAVNEASDPTDEEIKSAVQTYLANQPSLMNVTKRSVREALVAAFPNAELSYKKSMINKAIDDTLSGGAQA.

2 helical membrane-spanning segments follow: residues 108–128 and 374–394; these read FTIC…IIAF and LLLA…IAAL. A glycan (N-linked (GlcNAc...) asparagine) is linked at Asn-737. The next 3 membrane-spanning stretches (helical) occupy residues 762–782, 795–815, and 822–842; these read FIVF…VYLV, IPYI…ILFL, and YIGW…FLPI. A DEK-C domain is found at 1118 to 1175; that stretch reads DPTDEEIKSAVQTYLANQPSLMNVTKRSVREALVAAFPNAELSYKKSMINKAIDDTLS.

This sequence belongs to the chitin synthase family. Class V subfamily.

It localises to the cell membrane. The protein localises to the cytoplasmic vesicle membrane. It catalyses the reaction [(1-&gt;4)-N-acetyl-beta-D-glucosaminyl](n) + UDP-N-acetyl-alpha-D-glucosamine = [(1-&gt;4)-N-acetyl-beta-D-glucosaminyl](n+1) + UDP + H(+). Its function is as follows. Polymerizes chitin, a structural polymer of the cell wall and septum, by transferring the sugar moiety of UDP-GlcNAc to the non-reducing end of the growing chitin polymer. Plays a crucial role during infection and allows the fungus to overcome the resistance of the plant that checks growth of the pathogen and eventually eliminates it. The chain is Chitin synthase 6 from Mycosarcoma maydis (Corn smut fungus).